A 361-amino-acid chain; its full sequence is 5-formaminoimidazole-4-carboxamide-1-(beta)-D-ribofuranosyl 5'-monophosphate synthetase (361 aa).

The 5-amino-1-(5-phospho-beta-D-ribosyl)imidazole-4-carboxamide site is built by H27 and S94. The 233-residue stretch at 116–348 folds into the ATP-grasp domain; it reads RAILRWEAER…MGQRIAREIK (233 aa). ATP contacts are provided by residues 146–208 and E230; that span reads PDDI…ANYC. N258 contributes to the 5-amino-1-(5-phospho-beta-D-ribosyl)imidazole-4-carboxamide binding site. Mg(2+)-binding residues include Q297 and E310.

It belongs to the phosphohexose mutase family. Mg(2+) is required as a cofactor. The cofactor is Mn(2+).

The enzyme catalyses 5-amino-1-(5-phospho-beta-D-ribosyl)imidazole-4-carboxamide + formate + ATP = 5-formamido-1-(5-phospho-D-ribosyl)imidazole-4-carboxamide + ADP + phosphate. It functions in the pathway purine metabolism; IMP biosynthesis via de novo pathway; 5-formamido-1-(5-phospho-D-ribosyl)imidazole-4-carboxamide from 5-amino-1-(5-phospho-D-ribosyl)imidazole-4-carboxamide (formate route): step 1/1. Its function is as follows. Catalyzes the ATP- and formate-dependent formylation of 5-aminoimidazole-4-carboxamide-1-beta-d-ribofuranosyl 5'-monophosphate (AICAR) to 5-formaminoimidazole-4-carboxamide-1-beta-d-ribofuranosyl 5'-monophosphate (FAICAR) in the absence of folates. This Methanococcus maripaludis (strain C7 / ATCC BAA-1331) protein is 5-formaminoimidazole-4-carboxamide-1-(beta)-D-ribofuranosyl 5'-monophosphate synthetase.